The chain runs to 347 residues: S-adenosylmethionine decarboxylase proenzyme 4 (347 aa).

Residues Glu7 and Glu10 contribute to the active site. Glu66 contacts substrate. Ser67 functions as the Schiff-base intermediate with substrate; via pyruvic acid in the catalytic mechanism. Ser67 bears the Pyruvic acid (Ser); by autocatalysis mark. Cys81 serves as the catalytic Proton donor; for catalytic activity. Active-site proton acceptor; for processing activity residues include Ser237 and His250. Glu254 is a substrate binding site.

It belongs to the eukaryotic AdoMetDC family. It depends on pyruvate as a cofactor. Post-translationally, is synthesized initially as an inactive proenzyme. Formation of the active enzyme involves a self-maturation process in which the active site pyruvoyl group is generated from an internal serine residue via an autocatalytic post-translational modification. Two non-identical subunits are generated from the proenzyme in this reaction, and the pyruvate is formed at the N-terminus of the alpha chain, which is derived from the carboxyl end of the proenzyme. The post-translation cleavage follows an unusual pathway, termed non-hydrolytic serinolysis, in which the side chain hydroxyl group of the serine supplies its oxygen atom to form the C-terminus of the beta chain, while the remainder of the serine residue undergoes an oxidative deamination to produce ammonia and the pyruvoyl group blocking the N-terminus of the alpha chain.

The catalysed reaction is S-adenosyl-L-methionine + H(+) = S-adenosyl 3-(methylsulfanyl)propylamine + CO2. It functions in the pathway amine and polyamine biosynthesis; S-adenosylmethioninamine biosynthesis; S-adenosylmethioninamine from S-adenosyl-L-methionine: step 1/1. Essential for biosynthesis of the polyamines spermidine and spermine. Essential for polyamine homeostasis, and normal plant embryogenesis, growth and development. This Arabidopsis thaliana (Mouse-ear cress) protein is S-adenosylmethionine decarboxylase proenzyme 4.